A 391-amino-acid chain; its full sequence is NADH-quinone oxidoreductase subunit D (391 aa).

Belongs to the complex I 49 kDa subunit family. In terms of assembly, NDH-1 is composed of 14 different subunits. Subunits NuoB, C, D, E, F, and G constitute the peripheral sector of the complex.

It localises to the cell inner membrane. It carries out the reaction a quinone + NADH + 5 H(+)(in) = a quinol + NAD(+) + 4 H(+)(out). In terms of biological role, NDH-1 shuttles electrons from NADH, via FMN and iron-sulfur (Fe-S) centers, to quinones in the respiratory chain. The immediate electron acceptor for the enzyme in this species is believed to be ubiquinone. Couples the redox reaction to proton translocation (for every two electrons transferred, four hydrogen ions are translocated across the cytoplasmic membrane), and thus conserves the redox energy in a proton gradient. In Rickettsia rickettsii (strain Iowa), this protein is NADH-quinone oxidoreductase subunit D.